Here is a 115-residue protein sequence, read N- to C-terminus: Ribonuclease P protein component (115 aa).

The protein belongs to the RnpA family. Consists of a catalytic RNA component (M1 or rnpB) and a protein subunit.

It catalyses the reaction Endonucleolytic cleavage of RNA, removing 5'-extranucleotides from tRNA precursor.. Functionally, RNaseP catalyzes the removal of the 5'-leader sequence from pre-tRNA to produce the mature 5'-terminus. It can also cleave other RNA substrates such as 4.5S RNA. The protein component plays an auxiliary but essential role in vivo by binding to the 5'-leader sequence and broadening the substrate specificity of the ribozyme. The sequence is that of Ribonuclease P protein component from Baumannia cicadellinicola subsp. Homalodisca coagulata.